We begin with the raw amino-acid sequence, 1058 residues long: Carbamoyl phosphate synthase large chain (1058 aa).

A carboxyphosphate synthetic domain region spans residues 1-401 (MPKRTDIQKI…SLLKACRSLE (401 aa)). Positions 129, 169, 175, 176, 208, 210, 215, 241, 242, 243, 284, and 298 each coordinate ATP. The ATP-grasp 1 domain occupies 133 to 327 (KQLMEELEQP…IAKLAAKIAV (195 aa)). Positions 284, 298, and 300 each coordinate Mg(2+). Residues Q284, E298, and N300 each coordinate Mn(2+). Residues 402 to 546 (IGVHHNEIPE…YSTYGWENES (145 aa)) are oligomerization domain. Residues 547-929 (IRSDKESVLV…ALYKAFEASY (383 aa)) form a carbamoyl phosphate synthetic domain region. In terms of domain architecture, ATP-grasp 2 spans 671–861 (EQALKELDIP…MAQVATKLIL (191 aa)). Residues R707, S746, I748, E752, G777, V778, H779, S780, Q820, and E832 each coordinate ATP. Mg(2+) contacts are provided by Q820, E832, and N834. Mn(2+) contacts are provided by Q820, E832, and N834. The 129-residue stretch at 930 to 1058 (LHLPTFGNVV…ESRSFVTEAI (129 aa)) folds into the MGS-like domain. An allosteric domain region spans residues 930 to 1058 (LHLPTFGNVV…ESRSFVTEAI (129 aa)).

It belongs to the CarB family. As to quaternary structure, composed of two chains; the small (or glutamine) chain promotes the hydrolysis of glutamine to ammonia, which is used by the large (or ammonia) chain to synthesize carbamoyl phosphate. Tetramer of heterodimers (alpha,beta)4. It depends on Mg(2+) as a cofactor. Mn(2+) serves as cofactor.

It catalyses the reaction hydrogencarbonate + L-glutamine + 2 ATP + H2O = carbamoyl phosphate + L-glutamate + 2 ADP + phosphate + 2 H(+). The enzyme catalyses hydrogencarbonate + NH4(+) + 2 ATP = carbamoyl phosphate + 2 ADP + phosphate + 2 H(+). It participates in amino-acid biosynthesis; L-arginine biosynthesis; carbamoyl phosphate from bicarbonate: step 1/1. The protein operates within pyrimidine metabolism; UMP biosynthesis via de novo pathway; (S)-dihydroorotate from bicarbonate: step 1/3. In terms of biological role, large subunit of the glutamine-dependent carbamoyl phosphate synthetase (CPSase). CPSase catalyzes the formation of carbamoyl phosphate from the ammonia moiety of glutamine, carbonate, and phosphate donated by ATP, constituting the first step of 2 biosynthetic pathways, one leading to arginine and/or urea and the other to pyrimidine nucleotides. The large subunit (synthetase) binds the substrates ammonia (free or transferred from glutamine from the small subunit), hydrogencarbonate and ATP and carries out an ATP-coupled ligase reaction, activating hydrogencarbonate by forming carboxy phosphate which reacts with ammonia to form carbamoyl phosphate. This is Carbamoyl phosphate synthase large chain from Streptococcus pneumoniae (strain JJA).